The primary structure comprises 678 residues: RAS guanyl-releasing protein 4 (678 aa).

Composition is skewed to basic residues over residues 1–10 (MNRKDIKRKS) and 20–32 (GHGR…RHKT). Disordered stretches follow at residues 1-33 (MNRK…HKTC) and 165-185 (GDAS…MSSP). Residues 49 to 175 (GVLSESSCSV…DASNLLSPGG (127 aa)) enclose the N-terminal Ras-GEF domain. The 232-residue stretch at 201–432 (ETEELAQHLT…YELSYAREPR (232 aa)) folds into the Ras-GEF domain. The 36-residue stretch at 466 to 501 (HVEQLVESVFKNYDPEGHGSISLEDFEKLSANFPFA) folds into the EF-hand domain. The Phorbol-ester/DAG-type zinc finger occupies 540 to 595 (LHAFQEVTFRKPTFCHSCNGFVSTGPLWGVTKRGYRCQDCGLCCHRHCRDQVRVEC). 2 disordered regions span residues 598–620 (RPET…LPPT) and 651–678 (SSHS…KSSV). Pro residues predominate over residues 605–619 (PGPPGAPGPATPLPP).

Belongs to the RASGRP family. In terms of tissue distribution, expressed by mast cells and their progenitors (at protein level).

The protein localises to the cytoplasm. It localises to the cell membrane. Its function is as follows. Functions as a cation- and diacylglycerol (DAG)-regulated nucleotide exchange factor activating Ras through the exchange of bound GDP for GTP. In neutrophils, participates in a phospholipase C-activating N-formyl peptide-activated GPCR (G protein-coupled receptor) signaling pathway by promoting Ras-mediated activation of PIK3CG/PI3Kgamma to promote neutrophil functional responses. In CD117(+) dendritic cells and mast cells, participates in an lipopolysaccharide (LPS)-activated signaling pathway that stimulates the production of interferon-gamma and other pro-inflammatory cytokines by natural killer (NK) cells. May function in mast cell differentiation. Does not appear to be required for the development of B-cells, DC-cells, T-cells, or NK-cells. In Rattus norvegicus (Rat), this protein is RAS guanyl-releasing protein 4 (Rasgrp4).